Reading from the N-terminus, the 447-residue chain is Na(+)-translocating NADH-quinone reductase subunit A (447 aa).

It belongs to the NqrA family. In terms of assembly, composed of six subunits; NqrA, NqrB, NqrC, NqrD, NqrE and NqrF.

The catalysed reaction is a ubiquinone + n Na(+)(in) + NADH + H(+) = a ubiquinol + n Na(+)(out) + NAD(+). Functionally, NQR complex catalyzes the reduction of ubiquinone-1 to ubiquinol by two successive reactions, coupled with the transport of Na(+) ions from the cytoplasm to the periplasm. NqrA to NqrE are probably involved in the second step, the conversion of ubisemiquinone to ubiquinol. In Tolumonas auensis (strain DSM 9187 / NBRC 110442 / TA 4), this protein is Na(+)-translocating NADH-quinone reductase subunit A.